Consider the following 328-residue polypeptide: Putative thiosulfate sulfurtransferase mpst-1 (328 aa).

2 Rhodanese domains span residues 22-162 and 202-320; these read NKEG…EVST and KTSE…KKIS. Cys-278 functions as the Cysteine persulfide intermediate in the catalytic mechanism.

The catalysed reaction is thiosulfate + hydrogen cyanide = thiocyanate + sulfite + 2 H(+). This is Putative thiosulfate sulfurtransferase mpst-1 (mpst-1) from Caenorhabditis elegans.